The sequence spans 100 residues: DNA base-flipping protein (100 aa).

It belongs to the MGMT family. ATL subfamily.

In terms of biological role, involved in DNA damage recognition. Binds DNA containing O(6)-methylguanine. Binds to the damaged base and flips the base out of the DNA duplex into an extrahelical conformation, which allows processing by repair proteins. The polypeptide is DNA base-flipping protein (Vibrio parahaemolyticus serotype O3:K6 (strain AQ3810)).